We begin with the raw amino-acid sequence, 610 residues long: Elongation factor 4 (610 aa).

The tr-type G domain maps to 12–194; that stretch reads EKIRNFSIIA…QIVEKVPAPQ (183 aa). GTP contacts are provided by residues 24–29 and 141–144; these read DHGKST and NKID.

The protein belongs to the TRAFAC class translation factor GTPase superfamily. Classic translation factor GTPase family. LepA subfamily.

The protein resides in the cell membrane. The enzyme catalyses GTP + H2O = GDP + phosphate + H(+). Functionally, required for accurate and efficient protein synthesis under certain stress conditions. May act as a fidelity factor of the translation reaction, by catalyzing a one-codon backward translocation of tRNAs on improperly translocated ribosomes. Back-translocation proceeds from a post-translocation (POST) complex to a pre-translocation (PRE) complex, thus giving elongation factor G a second chance to translocate the tRNAs correctly. Binds to ribosomes in a GTP-dependent manner. The polypeptide is Elongation factor 4 (Streptococcus thermophilus (strain ATCC BAA-250 / LMG 18311)).